The sequence spans 299 residues: MSRPEQQFKKVLKNPQAQYAVYPTIKVERISTTEHMYFIATKPMFEGGRRNNVFLGHQVGQPVVFKYVSKKEIPGNEVVVMKALQDTPGVIKLIEYTENAMYHILIIEYIPNSIDLLHYHYFKKLEENEAKKIIFQMILIIQNIYEKGFIHGDIKDENLIIDIDQKIIKVIDFGSAVRLNETHPQYNMFGTWEYVCPEFYYYGYYYQLPLTVWTIGMVAVNLFRFRAENFYLNDILKGENYIPDNISETGKQFITDCLTINENKRLSFKGLVSHPWFKGLKKEIQPISELGVDYKNVIT.

Positions 39 to 277 constitute a Protein kinase domain; sequence IATKPMFEGG…FKGLVSHPWF (239 aa). Residues 45-53 and lysine 66 contribute to the ATP site; that span reads FEGGRRNNV. Aspartate 153 serves as the catalytic Proton acceptor.

The protein belongs to the protein kinase superfamily. Ser/Thr protein kinase family.

The protein localises to the virion. The protein resides in the host cytoplasm. The enzyme catalyses L-seryl-[protein] + ATP = O-phospho-L-seryl-[protein] + ADP + H(+). The catalysed reaction is L-threonyl-[protein] + ATP = O-phospho-L-threonyl-[protein] + ADP + H(+). In terms of biological role, essential for viral replication. It may mediate the virus progression through DNA replication. The polypeptide is Serine/threonine-protein kinase 1 (African swine fever virus (isolate Tick/Malawi/Lil 20-1/1983) (ASFV)).